Consider the following 776-residue polypeptide: Protein SEY1 (776 aa).

The Cytoplasmic portion of the chain corresponds to 1–681 (MADRSAIQLI…KRSIITTRTH (681 aa)). One can recognise a GB1/RHD3-type G domain in the interval 34-263 (GLDYHVISVF…TENYYFKPQY (230 aa)). 44–51 (GSQSSGKS) contributes to the GTP binding site. The helical transmembrane segment at 682-702 (IPPWIYVLLAVLGWNEFVAVI) threads the bilayer. Topologically, residues 703-705 (RNP) are lumenal. A helical transmembrane segment spans residues 706–726 (LFVTLTLILGATFFVIHKFGL). Residues 727 to 776 (WGPVVNVVQSAVGETRTAIKDKLRQFVVEDHEVKESFEMKDFSKNEQKEK) lie on the Cytoplasmic side of the membrane.

This sequence belongs to the TRAFAC class dynamin-like GTPase superfamily. GB1/RHD3 GTPase family. RHD3 subfamily. Interacts with RTN1 and YOP1; GTP binding is not required for these interactions.

The protein localises to the endoplasmic reticulum membrane. Cooperates with the reticulon proteins RTN1 and RTN2 and the tubule-shaping DP1 family protein YOP1 to generate and maintain the structure of the tubular endoplasmic reticulum network. Has GTPase activity, which is required for its function in ER organization. The sequence is that of Protein SEY1 from Saccharomyces cerevisiae (strain AWRI1631) (Baker's yeast).